Here is a 246-residue protein sequence, read N- to C-terminus: 1-(5-phosphoribosyl)-5-[(5-phosphoribosylamino)methylideneamino] imidazole-4-carboxamide isomerase (246 aa).

Asp-8 functions as the Proton acceptor in the catalytic mechanism. The active-site Proton donor is the Asp-131.

Belongs to the HisA/HisF family.

The protein resides in the cytoplasm. It carries out the reaction 1-(5-phospho-beta-D-ribosyl)-5-[(5-phospho-beta-D-ribosylamino)methylideneamino]imidazole-4-carboxamide = 5-[(5-phospho-1-deoxy-D-ribulos-1-ylimino)methylamino]-1-(5-phospho-beta-D-ribosyl)imidazole-4-carboxamide. It functions in the pathway amino-acid biosynthesis; L-histidine biosynthesis; L-histidine from 5-phospho-alpha-D-ribose 1-diphosphate: step 4/9. This Bordetella bronchiseptica (strain ATCC BAA-588 / NCTC 13252 / RB50) (Alcaligenes bronchisepticus) protein is 1-(5-phosphoribosyl)-5-[(5-phosphoribosylamino)methylideneamino] imidazole-4-carboxamide isomerase.